The following is a 161-amino-acid chain: Transcriptional repressor NrdR (161 aa).

Residues 1 to 11 show a composition bias toward polar residues; the sequence is MRCPSCNSLDT. The tract at residues 1–20 is disordered; the sequence is MRCPSCNSLDTQVKDSRPTE. A zinc finger spans residues 3-34; it reads CPSCNSLDTQVKDSRPTEDSSVIRRRRVCVTC. Residues 49 to 139 form the ATP-cone domain; sequence LTVIKRNGRR…VYRNFREAKD (91 aa).

This sequence belongs to the NrdR family. Zn(2+) is required as a cofactor.

In terms of biological role, negatively regulates transcription of bacterial ribonucleotide reductase nrd genes and operons by binding to NrdR-boxes. This chain is Transcriptional repressor NrdR, found in Bradyrhizobium sp. (strain BTAi1 / ATCC BAA-1182).